The following is a 343-amino-acid chain: 3-dehydroquinate synthase (343 aa).

Residues Ser61–Lys66, Gly95–Asp99, Thr119–Thr120, Lys132, Lys141, and Phe159–Thr162 each bind NAD(+). The Zn(2+) site is built by Glu174, His231, and His248.

The protein belongs to the sugar phosphate cyclases superfamily. Dehydroquinate synthase family. NAD(+) serves as cofactor. It depends on Co(2+) as a cofactor. The cofactor is Zn(2+).

The protein localises to the cytoplasm. It carries out the reaction 7-phospho-2-dehydro-3-deoxy-D-arabino-heptonate = 3-dehydroquinate + phosphate. Its pathway is metabolic intermediate biosynthesis; chorismate biosynthesis; chorismate from D-erythrose 4-phosphate and phosphoenolpyruvate: step 2/7. Functionally, catalyzes the conversion of 3-deoxy-D-arabino-heptulosonate 7-phosphate (DAHP) to dehydroquinate (DHQ). This Helicobacter pylori (strain J99 / ATCC 700824) (Campylobacter pylori J99) protein is 3-dehydroquinate synthase.